The primary structure comprises 60 residues: Large ribosomal subunit protein uL30 (60 aa).

Belongs to the universal ribosomal protein uL30 family. As to quaternary structure, part of the 50S ribosomal subunit.

The protein is Large ribosomal subunit protein uL30 of Thermus thermophilus (strain ATCC BAA-163 / DSM 7039 / HB27).